Here is a 158-residue protein sequence, read N- to C-terminus: 2-C-methyl-D-erythritol 2,4-cyclodiphosphate synthase (158 aa).

2 residues coordinate a divalent metal cation: Asp-9 and His-11. Residues 9-11 (DVH) and 35-36 (HS) each bind 4-CDP-2-C-methyl-D-erythritol 2-phosphate. An a divalent metal cation-binding site is contributed by His-43. 4-CDP-2-C-methyl-D-erythritol 2-phosphate contacts are provided by residues 57-59 (DIG), 62-66 (FPDTD), 101-107 (AQAPKMA), 133-136 (TTTE), Phe-140, and Arg-143.

Belongs to the IspF family. Homotrimer. A divalent metal cation serves as cofactor.

It carries out the reaction 4-CDP-2-C-methyl-D-erythritol 2-phosphate = 2-C-methyl-D-erythritol 2,4-cyclic diphosphate + CMP. The protein operates within isoprenoid biosynthesis; isopentenyl diphosphate biosynthesis via DXP pathway; isopentenyl diphosphate from 1-deoxy-D-xylulose 5-phosphate: step 4/6. Functionally, involved in the biosynthesis of isopentenyl diphosphate (IPP) and dimethylallyl diphosphate (DMAPP), two major building blocks of isoprenoid compounds. Catalyzes the conversion of 4-diphosphocytidyl-2-C-methyl-D-erythritol 2-phosphate (CDP-ME2P) to 2-C-methyl-D-erythritol 2,4-cyclodiphosphate (ME-CPP) with a corresponding release of cytidine 5-monophosphate (CMP). The sequence is that of 2-C-methyl-D-erythritol 2,4-cyclodiphosphate synthase from Vibrio vulnificus (strain CMCP6).